Here is a 267-residue protein sequence, read N- to C-terminus: Mannose-specific lectin 1 (267 aa).

A signal peptide spans 1-24; it reads MAKSLVLSSLLLALLLAAPLASLA. Bulb-type lectin domains follow at residues 26–136 and 150–260; these read NNVL…APNR and RNVL…SPAR. 2 disulfide bridges follow: Cys54–Cys76 and Cys178–Cys203.

As to quaternary structure, heterotetramer of 2 domain 1 and 2 domain 2 chains arranged as a dimer of domain 1/domain 2 heterodimers.

In terms of biological role, mannose-specific lectin. Has weak agglutinating activity towards trypsin-treated erythrocytes from rabbit but not from human. The chain is Mannose-specific lectin 1 from Crocus vernus (Dutch crocus).